We begin with the raw amino-acid sequence, 715 residues long: Forkhead box protein P2 (715 aa).

Residues 1–28 show a composition bias toward polar residues; the sequence is MMQESATETISNSSMNQNGMSTLSSQLD. 2 disordered regions span residues 1–46 and 281–339; these read MMQE…EVST and DNGI…TGAS. A compositionally biased stretch (low complexity) spans 292–305; it reads TTNNSSSTTSSNTS. Basic and acidic residues predominate over residues 326 to 337; it reads ARRDSSSHEETG. The C2H2-type zinc finger occupies 346–371; that stretch reads GVCKWPGCESICEDFGQFLKHLNNEH. The segment at 388-409 is leucine-zipper; sequence VQQLEIQLSKERERLQAMMTHL. The interval 422–426 is CTBP1-binding; the sequence is PLNLV. The segment covering 438 to 459 has biased composition (low complexity); the sequence is TSPQSLPQTPTTPTAPVTPITQ. Residues 438 to 465 are disordered; sequence TSPQSLPQTPTTPTAPVTPITQGPSVIT. The fork-head DNA-binding region spans 504 to 594; sequence RPPFTYATLI…SQKITGSPTL (91 aa). Disordered regions lie at residues 649–668 and 678–715; these read LDHI…QPHI and VIAE…EDLE. Residues 699-715 are compositionally biased toward acidic residues; it reads LEDDREIEEEPLSEDLE.

In terms of assembly, forms homodimers and heterodimers with FOXP1 and FOXP4. Dimerization is required for DNA-binding. Interacts with CTBP1. Interacts with FOXP1. Isoform 1 and isoform 3 interact with TBR1. Interacts with ZMYM2. As to expression, isoform 1 and isoform 6 are expressed in adult and fetal brain, caudate nucleus and lung.

The protein localises to the nucleus. Its function is as follows. Transcriptional repressor that may play a role in the specification and differentiation of lung epithelium. May also play a role in developing neural, gastrointestinal and cardiovascular tissues. Can act with CTBP1 to synergistically repress transcription but CTPBP1 is not essential. Plays a role in synapse formation by regulating SRPX2 levels. Involved in neural mechanisms mediating the development of speech and language. The sequence is that of Forkhead box protein P2 (FOXP2) from Homo sapiens (Human).